The following is a 490-amino-acid chain: Alginate production protein AlgE (490 aa).

Positions 1–32 (MNSSRSVNPRPSFAPRALSLAIALLLGAPAFA) are cleaved as a signal peptide. Polar residues-rich tracts occupy residues 102–115 (DTLQ…NNSR) and 343–355 (QFQQ…NRSN). 2 disordered regions span residues 102 to 121 (DTLQ…GREP) and 331 to 355 (ARGS…NRSN).

Belongs to the AlgE family.

Its subcellular location is the cell outer membrane. Its pathway is glycan biosynthesis; alginate biosynthesis. In terms of biological role, has non-porin-like, channel-forming properties and probably functions as an alginate permeability pore. In Pseudomonas aeruginosa (strain ATCC 15692 / DSM 22644 / CIP 104116 / JCM 14847 / LMG 12228 / 1C / PRS 101 / PAO1), this protein is Alginate production protein AlgE (algE).